We begin with the raw amino-acid sequence, 167 residues long: MKIHHLFQPHFRLIYLFIWGLIISGLSDLTWLIPLNVLAVSLFFISLQFSQKSFLPYLKRWFALVIFIVLMWATLSWKIGENGIELNFQGIELAEKLSLRTHLLLISLWLFLWNINDAVLVPSHWQIAFARKINSTFCADRTLHCTAWRIASKNGYCHARSWISSSA.

Helical transmembrane passes span 13 to 33 (LIYL…TWLI), 37 to 57 (VLAV…FLPY), 61 to 81 (WFAL…KIGE), and 103 to 123 (LLLI…LVPS).

It is found in the cell membrane. This is an uncharacterized protein from Haemophilus influenzae (strain ATCC 51907 / DSM 11121 / KW20 / Rd).